A 489-amino-acid chain; its full sequence is Glycogen synthase (489 aa).

R20 is an ADP-alpha-D-glucose binding site.

The protein belongs to the glycosyltransferase 1 family. Bacterial/plant glycogen synthase subfamily.

The catalysed reaction is [(1-&gt;4)-alpha-D-glucosyl](n) + ADP-alpha-D-glucose = [(1-&gt;4)-alpha-D-glucosyl](n+1) + ADP + H(+). Its pathway is glycan biosynthesis; glycogen biosynthesis. Its function is as follows. Synthesizes alpha-1,4-glucan chains using ADP-glucose. In Chlorobium chlorochromatii (strain CaD3), this protein is Glycogen synthase.